The sequence spans 255 residues: Acetylglutamate kinase (255 aa).

Substrate contacts are provided by residues 40-41 (GG), Arg62, and Asn153.

This sequence belongs to the acetylglutamate kinase family. ArgB subfamily.

The protein localises to the cytoplasm. The catalysed reaction is N-acetyl-L-glutamate + ATP = N-acetyl-L-glutamyl 5-phosphate + ADP. The protein operates within amino-acid biosynthesis; L-arginine biosynthesis; N(2)-acetyl-L-ornithine from L-glutamate: step 2/4. In terms of biological role, catalyzes the ATP-dependent phosphorylation of N-acetyl-L-glutamate. This is Acetylglutamate kinase from Bacillus cereus (strain ZK / E33L).